The chain runs to 148 residues: Large ribosomal subunit protein bL9 (148 aa).

It belongs to the bacterial ribosomal protein bL9 family.

In terms of biological role, binds to the 23S rRNA. In Frankia casuarinae (strain DSM 45818 / CECT 9043 / HFP020203 / CcI3), this protein is Large ribosomal subunit protein bL9.